A 424-amino-acid polypeptide reads, in one-letter code: CinA-like protein (424 aa).

Belongs to the CinA family.

In Shewanella piezotolerans (strain WP3 / JCM 13877), this protein is CinA-like protein.